The sequence spans 94 residues: Putative pterin-4-alpha-carbinolamine dehydratase (94 aa).

It belongs to the pterin-4-alpha-carbinolamine dehydratase family.

The enzyme catalyses (4aS,6R)-4a-hydroxy-L-erythro-5,6,7,8-tetrahydrobiopterin = (6R)-L-erythro-6,7-dihydrobiopterin + H2O. The polypeptide is Putative pterin-4-alpha-carbinolamine dehydratase (Mycolicibacterium smegmatis (strain ATCC 700084 / mc(2)155) (Mycobacterium smegmatis)).